Here is a 362-residue protein sequence, read N- to C-terminus: Leucoanthocyanidin dioxygenase (362 aa).

In terms of domain architecture, Fe2OG dioxygenase spans 211-313 (MEELLLQKKI…RISWAVFCEP (103 aa)). 3 residues coordinate Fe cation: histidine 238, aspartate 240, and histidine 294.

It belongs to the iron/ascorbate-dependent oxidoreductase family. The cofactor is Fe cation. L-ascorbate serves as cofactor.

The enzyme catalyses a (2R,3S,4S)-leucoanthocyanidin + 2-oxoglutarate + O2 = a 4-H-anthocyanidin with a 3-hydroxy group + succinate + CO2 + 2 H2O. The protein operates within pigment biosynthesis; anthocyanin biosynthesis. Functionally, oxidation of leucoanthocyanidins into anthocyanidins. The sequence is that of Leucoanthocyanidin dioxygenase from Vitis vinifera (Grape).